The primary structure comprises 360 residues: Phospho-N-acetylmuramoyl-pentapeptide-transferase (360 aa).

10 helical membrane-spanning segments follow: residues 26–46, 70–90, 94–114, 132–152, 168–188, 199–219, 236–256, 263–283, 288–308, and 338–358; these read AILSVLTALGLSLWMGPIMIK, GTPTMGGIMILAAISITILLW, SNPYVWAVLTVLLGYGAVGFV, WKYFWQSLIAFVVAFALYAYG, VMPQLGLMYIILTYFVIVGTS, GLAIMPTVLVAAGFAVIAWAT, ASELVVVCTAIVGAGLGFLWF, VFMGDVGSLALGGALGTIAVL, LVLVIMGGVFVMETLSVILQV, and VIVRFWIISMVLVLIGLATLK.

Belongs to the glycosyltransferase 4 family. MraY subfamily. The cofactor is Mg(2+).

It is found in the cell inner membrane. The catalysed reaction is UDP-N-acetyl-alpha-D-muramoyl-L-alanyl-gamma-D-glutamyl-meso-2,6-diaminopimeloyl-D-alanyl-D-alanine + di-trans,octa-cis-undecaprenyl phosphate = di-trans,octa-cis-undecaprenyl diphospho-N-acetyl-alpha-D-muramoyl-L-alanyl-D-glutamyl-meso-2,6-diaminopimeloyl-D-alanyl-D-alanine + UMP. Its pathway is cell wall biogenesis; peptidoglycan biosynthesis. Its function is as follows. Catalyzes the initial step of the lipid cycle reactions in the biosynthesis of the cell wall peptidoglycan: transfers peptidoglycan precursor phospho-MurNAc-pentapeptide from UDP-MurNAc-pentapeptide onto the lipid carrier undecaprenyl phosphate, yielding undecaprenyl-pyrophosphoryl-MurNAc-pentapeptide, known as lipid I. The chain is Phospho-N-acetylmuramoyl-pentapeptide-transferase from Vibrio parahaemolyticus serotype O3:K6 (strain RIMD 2210633).